The sequence spans 312 residues: Methionyl-tRNA formyltransferase (312 aa).

109–112 (SLLP) is a (6S)-5,6,7,8-tetrahydrofolate binding site.

The protein belongs to the Fmt family.

It catalyses the reaction L-methionyl-tRNA(fMet) + (6R)-10-formyltetrahydrofolate = N-formyl-L-methionyl-tRNA(fMet) + (6S)-5,6,7,8-tetrahydrofolate + H(+). Attaches a formyl group to the free amino group of methionyl-tRNA(fMet). The formyl group appears to play a dual role in the initiator identity of N-formylmethionyl-tRNA by promoting its recognition by IF2 and preventing the misappropriation of this tRNA by the elongation apparatus. The chain is Methionyl-tRNA formyltransferase from Listeria monocytogenes serovar 1/2a (strain ATCC BAA-679 / EGD-e).